Here is a 121-residue protein sequence, read N- to C-terminus: MGRIFLDHIGGTRLFSCANCDTILTNRSELISTRFTGATGRAFLFNKVVNLQYSEVQDRVMLTGRHMVRDVSCKNCNSKLGWIYEFATEDSQRYKEGRVILERALVRESEGFEEHVPSDNS.

The 98-residue stretch at 13-110 folds into the Yippee domain; that stretch reads RLFSCANCDT…LERALVRESE (98 aa). 4 residues coordinate Zn(2+): Cys-17, Cys-20, Cys-73, and Cys-76. Ser-118 carries the phosphoserine modification.

Belongs to the yippee family. In terms of assembly, identified in the CTLH complex that contains GID4, RANBP9 and/or RANBP10, MKLN1, MAEA, RMND5A (or alternatively its paralog RMND5B), GID8, ARMC8, WDR26 and YPEL5. Within this complex, MAEA, RMND5A (or alternatively its paralog RMND5B), GID8, WDR26, and RANBP9 and/or RANBP10 form the catalytic core, while GID4, MKLN1, ARMC8 and YPEL5 have ancillary roles. Interacts with RANBP9 and RANBP10.

Its subcellular location is the nucleus. The protein resides in the cytoplasm. The protein localises to the cytoskeleton. It is found in the microtubule organizing center. It localises to the centrosome. Its subcellular location is the spindle pole. The protein resides in the midbody. Its function is as follows. Component of the CTLH E3 ubiquitin-protein ligase complex that selectively accepts ubiquitin from UBE2H and mediates ubiquitination and subsequent proteasomal degradation of the transcription factor HBP1. Required for normal cell proliferation. The chain is Protein yippee-like 5 (YPEL5) from Bos taurus (Bovine).